Reading from the N-terminus, the 252-residue chain is Hydroxyacylglutathione hydrolase (252 aa).

Zn(2+) contacts are provided by His52, His54, Asp56, His57, His107, Asp128, and His166.

It belongs to the metallo-beta-lactamase superfamily. Glyoxalase II family. Monomer. It depends on Zn(2+) as a cofactor.

The enzyme catalyses an S-(2-hydroxyacyl)glutathione + H2O = a 2-hydroxy carboxylate + glutathione + H(+). It participates in secondary metabolite metabolism; methylglyoxal degradation; (R)-lactate from methylglyoxal: step 2/2. Thiolesterase that catalyzes the hydrolysis of S-D-lactoyl-glutathione to form glutathione and D-lactic acid. The polypeptide is Hydroxyacylglutathione hydrolase (Neisseria meningitidis serogroup C (strain 053442)).